Here is a 402-residue protein sequence, read N- to C-terminus: uncharacterized protein (402 aa).

Transmembrane regions (helical) follow at residues 26-46 (IFMS…AIAY), 67-87 (VALA…YVGF), 96-116 (FAAF…LTII), 126-146 (TVSI…NGTL), 168-188 (LFIL…IGFL), 213-233 (YVAY…MIDS), 235-255 (LFLL…GGYG), 289-309 (PIVI…GSII), 312-332 (ISVF…FDSL), 338-358 (FKNI…AVTI), 360-380 (FALL…SFLL), and 381-401 (LYKK…GYLI).

This sequence belongs to the chromate ion transporter (CHR) (TC 2.A.51) family.

It localises to the cell membrane. This is an uncharacterized protein from Methanocaldococcus jannaschii (strain ATCC 43067 / DSM 2661 / JAL-1 / JCM 10045 / NBRC 100440) (Methanococcus jannaschii).